The sequence spans 378 residues: MAIEFKRSPKPTIGVEWEIALVDPESRDLAPRAAEVLEIVAERHPEVHLEGEFLQNTVELVTGICDTVPEAVAELDRALAAVQEAATELGLRPWTSGSHPFSDFRENPVSKKGSYDEIIARTQYWGNQMLIWGIHVHVGISHEDRVWPIINALVTNYPHLLALSASSPAWDGLDTGYASNRTMLYQQLPTAGLPYQFQSWDEWVSYMADQDKSGVINHTGSMHFDIRPASKWGTIEVRIADSTSNLRELSAIAALTHCLVVHYDRMIDRGEQLPTLQPWHVAENKWRAARYGLDAEIIISRDTDEAMVQDELRRLVDRLTPLAAELGCLRELDLVLEIIERGGGYERQRRAYQRTGTWIAAVDLACDELNELRPLEAE.

Belongs to the glutamate--cysteine ligase type 2 family. YbdK subfamily.

It catalyses the reaction L-cysteine + L-glutamate + ATP = gamma-L-glutamyl-L-cysteine + ADP + phosphate + H(+). Its function is as follows. ATP-dependent carboxylate-amine ligase which exhibits weak glutamate--cysteine ligase activity. The protein is Putative glutamate--cysteine ligase 2-1 of Corynebacterium efficiens (strain DSM 44549 / YS-314 / AJ 12310 / JCM 11189 / NBRC 100395).